A 403-amino-acid polypeptide reads, in one-letter code: Acetyl-CoA acetyltransferase IA (403 aa).

Residue Cys91 is the Acyl-thioester intermediate of the active site. Catalysis depends on proton acceptor residues His353 and Cys383. The Microbody targeting signal signature appears at 401–403 (AKL).

This sequence belongs to the thiolase-like superfamily. Thiolase family. Multimeric.

It is found in the peroxisome. The catalysed reaction is 2 acetyl-CoA = acetoacetyl-CoA + CoA. The protein operates within metabolic intermediate biosynthesis; (R)-mevalonate biosynthesis; (R)-mevalonate from acetyl-CoA: step 1/3. This Candida tropicalis (Yeast) protein is Acetyl-CoA acetyltransferase IA (PACTA).